A 195-amino-acid polypeptide reads, in one-letter code: Putative NADH dehydrogenase/NAD(P)H nitroreductase Caul_0018 (195 aa).

The protein belongs to the nitroreductase family. HadB/RutE subfamily. FMN is required as a cofactor.

This chain is Putative NADH dehydrogenase/NAD(P)H nitroreductase Caul_0018, found in Caulobacter sp. (strain K31).